Reading from the N-terminus, the 645-residue chain is Synaptotagmin-16 (645 aa).

3 disordered regions span residues 102–121 (AQNS…STMS), 144–192 (EHHL…DSDE), and 206–344 (QSFR…PSGV). Over residues 167–177 (ETVNGKKQVNS) the composition is skewed to polar residues. Over residues 179-192 (GDDEELSTSSDSDE) the composition is skewed to acidic residues. Positions 287–303 (HQESSVVQSLRRQSTEG) are enriched in polar residues. The C2 1 domain maps to 350–469 (KCGDLDVIFE…HPEGEMKVTL (120 aa)). The disordered stretch occupies residues 478 to 503 (SSGGSPLSPSAVSHSDSTSSTQSLSH). Over residues 485–502 (SPSAVSHSDSTSSTQSLS) the composition is skewed to low complexity. The C2 2 domain occupies 505–640 (GAPELLVGLS…TKGQQICRWH (136 aa)).

The protein belongs to the synaptotagmin family. Homodimer. Can also form heterodimers. Expressed in brain.

May be involved in the trafficking and exocytosis of secretory vesicles in non-neuronal tissues. Is Ca(2+)-independent. This Homo sapiens (Human) protein is Synaptotagmin-16 (SYT16).